Consider the following 299-residue polypeptide: ATP phosphoribosyltransferase (299 aa).

This sequence belongs to the ATP phosphoribosyltransferase family. Long subfamily. Requires Mg(2+) as cofactor.

Its subcellular location is the cytoplasm. It carries out the reaction 1-(5-phospho-beta-D-ribosyl)-ATP + diphosphate = 5-phospho-alpha-D-ribose 1-diphosphate + ATP. Its pathway is amino-acid biosynthesis; L-histidine biosynthesis; L-histidine from 5-phospho-alpha-D-ribose 1-diphosphate: step 1/9. Its activity is regulated as follows. Feedback inhibited by histidine. Its function is as follows. Catalyzes the condensation of ATP and 5-phosphoribose 1-diphosphate to form N'-(5'-phosphoribosyl)-ATP (PR-ATP). Has a crucial role in the pathway because the rate of histidine biosynthesis seems to be controlled primarily by regulation of HisG enzymatic activity. The sequence is that of ATP phosphoribosyltransferase from Campylobacter jejuni subsp. jejuni serotype O:6 (strain 81116 / NCTC 11828).